The primary structure comprises 424 residues: Probable aminotransferase TAT4 (424 aa).

It belongs to the class-I pyridoxal-phosphate-dependent aminotransferase family. It depends on pyridoxal 5'-phosphate as a cofactor.

This chain is Probable aminotransferase TAT4, found in Arabidopsis thaliana (Mouse-ear cress).